The chain runs to 294 residues: 4-hydroxy-tetrahydrodipicolinate synthase (294 aa).

Threonine 47 provides a ligand contact to pyruvate. The active-site Proton donor/acceptor is the tyrosine 135. The active-site Schiff-base intermediate with substrate is the lysine 163. Valine 205 is a binding site for pyruvate.

This sequence belongs to the DapA family. In terms of assembly, homotetramer; dimer of dimers.

It is found in the cytoplasm. It catalyses the reaction L-aspartate 4-semialdehyde + pyruvate = (2S,4S)-4-hydroxy-2,3,4,5-tetrahydrodipicolinate + H2O + H(+). It participates in amino-acid biosynthesis; L-lysine biosynthesis via DAP pathway; (S)-tetrahydrodipicolinate from L-aspartate: step 3/4. Its function is as follows. Catalyzes the condensation of (S)-aspartate-beta-semialdehyde [(S)-ASA] and pyruvate to 4-hydroxy-tetrahydrodipicolinate (HTPA). This Rickettsia bellii (strain OSU 85-389) protein is 4-hydroxy-tetrahydrodipicolinate synthase.